Consider the following 889-residue polypeptide: MSYFGEHFWGEKNHGFEVLYHSVKQGPISTKELADFIRERATIEETYSKAMAKLSKLASNGTPMGTFAPLWEVFRVSSDKLALCHLELTRKLQDLIKDVLRYGEEQLKTHKKCKEEVVSTLDAVQVLSGVSQLLPKSRENYLNRCMDQERLRRESTSQKEMDKAETKTKKAAESLRRSVEKYNSARADFEQKMLDSALRFQAMEETHLRHMKALLGSYAHSVEDTHVQIGQVHEEFKQNIENVSVEMLLRKFAESKGTGREKPGPLDFEAYSAAALQEAMKRLRGAKAFRLPGLSRREREPEPPAAVDFLEPDSGTCPEVDEEGFTVRPDVTQNSTAEPSRFSSSDSDFDDEEPRKFYVHIKPAPARAPACSPEAAAAQLRATAGSLILPPGPGGTMKRHSSRDAAGKPQRPRSAPRTSSCAERLQSEEQVSKNLFGPPLESAFDHEDFTGSSSLGFTSSPSPFSSSSPENVEDSGLDSPSHAAPGPSPDSWVPRPGTPQSPPSCRAPPPEARGIRAPPLPDSPQPLASSPGPWGLEALAGGDLMPAPADPTAREGLAAPPRRLRSRKVSCPLTRSNGDLSRSLSPSPLGSSAASTALERPSFLSQTGHGVSRGPSPVVLGSQDALPIATAFTEYVHAYFRGHSPSCLARVTGELTMTFPAGIVRVFSGTPPPPVLSFRLVHTTAIEHFQPNADLLFSDPSQSDPETKDFWLNMAALTEALQRQAEQNPTASYYNVVLLRYQFSRPGPQSVPLQLSAHWQCGATLTQVSVEYGYRPGATAVPTPLTNVQILLPVGEPVTNVRLQPAATWNLEEKRLTWRLPDVSEAGGSGRLSASWEPLSGPSTPSPVAAQFTSEGTTLSGVDLELVGSGYRMSLVKRRFATGMYLVSC.

An F-BAR domain is found at 1–248 (MSYFGEHFWG…NIENVSVEML (248 aa)). A mediates membrane-binding region spans residues 1–275 (MSYFGEHFWG…LDFEAYSAAA (275 aa)). Residues 156-195 (TSQKEMDKAETKTKKAAESLRRSVEKYNSARADFEQKMLD) are a coiled coil. The segment at 267 to 442 (DFEAYSAAAL…KNLFGPPLES (176 aa)) is mediates interaction with the adaptor protein complex AP-2. Positions 294 to 352 (LSRREREPEPPAAVDFLEPDSGTCPEVDEEGFTVRPDVTQNSTAEPSRFSSSDSDFDDE) are disordered. 3 positions are modified to phosphoserine: serine 295, serine 347, and serine 372. Positions 382–596 (ATAGSLILPP…SPLGSSAAST (215 aa)) are disordered. Residues 450–469 (TGSSSLGFTSSPSPFSSSSP) are compositionally biased toward low complexity. Positions 496-511 (PGTPQSPPSCRAPPPE) are enriched in pro residues. Position 530 is a phosphoserine (serine 530). Low complexity predominate over residues 580–596 (LSRSLSPSPLGSSAAST). The tract at residues 609–889 (HGVSRGPSPV…FATGMYLVSC (281 aa)) is mediates interaction with AGFG1, CALM, DAB2, EPS15, EPS15R, ITSN1 and clathrin. The residue at position 616 (serine 616) is a Phosphoserine. Residues 625–888 (ALPIATAFTE…RFATGMYLVS (264 aa)) enclose the MHD domain. A disordered region spans residues 826–849 (AGGSGRLSASWEPLSGPSTPSPVA).

This sequence belongs to the FCHO family. As to quaternary structure, may oligomerize and form homotetramer. Interacts with AP2A2 and AP2B1; 2 subunits of the adaptor protein complex AP-2. Interacts with DAB2. Interacts with clathrin (CLTC or CLTCL1). Interacts with EPS15, EPS15R and ITSN1. Interacts with AGFG1 and CALM. May interact with ACVR1; linking this receptor to clathrin-mediated endocytosis. Predominantly expressed in lymphoid cells.

The protein localises to the membrane. The protein resides in the clathrin-coated pit. Its function is as follows. Functions in an early step of clathrin-mediated endocytosis. Has both a membrane binding/bending activity and the ability to recruit proteins essential to the formation of functional clathrin-coated pits. May regulate Bmp signaling by regulating clathrin-mediated endocytosis of Bmp receptors. Involved in the regulation of T-cell poliferation and activation. Affects TCR clustering upon receptor triggering and modulates its internalisation, playing a role in TCR-dependent T-cell activation. The polypeptide is F-BAR domain only protein 1 (Homo sapiens (Human)).